We begin with the raw amino-acid sequence, 557 residues long: Glutathione hydrolase proenzyme (557 aa).

The N-terminal stretch at M1 to A24 is a signal peptide. R94 is a binding site for L-glutamate. T364 functions as the Nucleophile in the catalytic mechanism. Residues T382, N384, E403, D406, S435 to S436, and G456 to G457 contribute to the L-glutamate site.

The protein belongs to the gamma-glutamyltransferase family. As to quaternary structure, this enzyme consists of two polypeptide chains, which are synthesized in precursor form from a single polypeptide. Cleaved by autocatalysis into a large and a small subunit.

Its subcellular location is the periplasm. The enzyme catalyses an N-terminal (5-L-glutamyl)-[peptide] + an alpha-amino acid = 5-L-glutamyl amino acid + an N-terminal L-alpha-aminoacyl-[peptide]. It carries out the reaction glutathione + H2O = L-cysteinylglycine + L-glutamate. It catalyses the reaction an S-substituted glutathione + H2O = an S-substituted L-cysteinylglycine + L-glutamate. The protein operates within sulfur metabolism; glutathione metabolism. The chain is Glutathione hydrolase proenzyme (ggt) from Pseudomonas aeruginosa (strain ATCC 15692 / DSM 22644 / CIP 104116 / JCM 14847 / LMG 12228 / 1C / PRS 101 / PAO1).